Here is a 231-residue protein sequence, read N- to C-terminus: 5'-methylthioadenosine/S-adenosylhomocysteine nucleosidase (231 aa).

Glu-12 acts as the Proton acceptor in catalysis. Residues Gly-78, Val-153, and 174–175 (ME) contribute to the substrate site. Asp-198 serves as the catalytic Proton donor.

It belongs to the PNP/UDP phosphorylase family. MtnN subfamily.

The enzyme catalyses S-adenosyl-L-homocysteine + H2O = S-(5-deoxy-D-ribos-5-yl)-L-homocysteine + adenine. It catalyses the reaction S-methyl-5'-thioadenosine + H2O = 5-(methylsulfanyl)-D-ribose + adenine. It carries out the reaction 5'-deoxyadenosine + H2O = 5-deoxy-D-ribose + adenine. It functions in the pathway amino-acid biosynthesis; L-methionine biosynthesis via salvage pathway; S-methyl-5-thio-alpha-D-ribose 1-phosphate from S-methyl-5'-thioadenosine (hydrolase route): step 1/2. Catalyzes the irreversible cleavage of the glycosidic bond in both 5'-methylthioadenosine (MTA) and S-adenosylhomocysteine (SAH/AdoHcy) to adenine and the corresponding thioribose, 5'-methylthioribose and S-ribosylhomocysteine, respectively. Also cleaves 5'-deoxyadenosine, a toxic by-product of radical S-adenosylmethionine (SAM) enzymes, into 5-deoxyribose and adenine. The sequence is that of 5'-methylthioadenosine/S-adenosylhomocysteine nucleosidase from Aliivibrio fischeri (strain MJ11) (Vibrio fischeri).